Here is a 204-residue protein sequence, read N- to C-terminus: Large ribosomal subunit protein eL15 (204 aa).

Belongs to the eukaryotic ribosomal protein eL15 family. As to quaternary structure, component of the large ribosomal subunit.

The protein resides in the cytoplasm. Its function is as follows. Component of the large ribosomal subunit. The ribosome is a large ribonucleoprotein complex responsible for the synthesis of proteins in the cell. This chain is Large ribosomal subunit protein eL15 (rpl15), found in Silurus meridionalis (Southern catfish).